The primary structure comprises 112 residues: Large ribosomal subunit protein bL17 (112 aa).

It belongs to the bacterial ribosomal protein bL17 family. In terms of assembly, part of the 50S ribosomal subunit. Contacts protein L32.

This is Large ribosomal subunit protein bL17 from Desulfitobacterium hafniense (strain DSM 10664 / DCB-2).